A 1576-amino-acid polypeptide reads, in one-letter code: DExH-box ATP-dependent RNA helicase DExH2 (1576 aa).

The region spanning 15–78 (EATGAWATKV…ERRLSLFKGD (64 aa)) is the R3H domain. In terms of domain architecture, Helicase ATP-binding spans 227 to 396 (ISAVESNQVV…FGGCPVVRVP (170 aa)). Residue 240–247 (GETGCGKT) participates in ATP binding. Positions 343 to 346 (DEIH) match the DEIH box motif. Positions 561–735 (LIVKLMKKIC…ELCLQVKMLD (175 aa)) constitute a Helicase C-terminal domain. Disordered stretches follow at residues 1137–1165 (ATSPRDDIPSTNPNELREHDPNTTPMGSK), 1177–1223 (MEES…SLNN), and 1260–1576 (DMGN…PSDQ). Polar residues predominate over residues 1281–1301 (PNSANSMDLGNMEENTPSDLA). Residues 1305 to 1319 (KKKEPKSVSKLDLGS) show a composition bias toward basic and acidic residues. A PH1 motif is present at residues 1349–1360 (KQPEKKRSRSKK). Positions 1352 to 1363 (EKKRSRSKKRKS) are enriched in basic residues. The segment covering 1381–1412 (ANENEQTEPKSANNLDLGNMKENTPSDLANEN) has biased composition (polar residues). The PH2 motif lies at 1454 to 1465 (KQPKKKRSRSKK). The span at 1455 to 1467 (QPKKKRSRSKKCK) shows a compositional bias: basic residues. Residues 1490–1508 (EQKDPESVNRLDPGKEKES) are compositionally biased toward basic and acidic residues. A compositionally biased stretch (polar residues) spans 1509-1524 (IPSNLVSGNEQPDSNT). Residues 1528 to 1537 (KKPKKKKRKL) are compositionally biased toward basic residues. Positions 1530-1537 (PKKKKRKL) match the Nuclear localization signal motif. Positions 1540-1562 (NFDSVNNMEEKMPSTNVLSQGNK) are enriched in polar residues.

This sequence belongs to the DExH box helicase family. Homodimer.

Its subcellular location is the nucleus. It carries out the reaction ATP + H2O = ADP + phosphate + H(+). May function as an ATP-dependent RNA/DNA helicase. Binds DNA in vitro in a non-specific manner. This Arabidopsis thaliana (Mouse-ear cress) protein is DExH-box ATP-dependent RNA helicase DExH2.